Here is a 488-residue protein sequence, read N- to C-terminus: 3-octaprenyl-4-hydroxybenzoate carboxy-lyase (488 aa).

Residue N172 coordinates Mn(2+). Residues 175-177 (IYR), 189-191 (RWL), and 194-195 (RG) contribute to the prenylated FMN site. E238 provides a ligand contact to Mn(2+). D287 (proton donor) is an active-site residue.

It belongs to the UbiD family. In terms of assembly, homohexamer. Prenylated FMN serves as cofactor. Mn(2+) is required as a cofactor.

The protein resides in the cell membrane. The catalysed reaction is a 4-hydroxy-3-(all-trans-polyprenyl)benzoate + H(+) = a 2-(all-trans-polyprenyl)phenol + CO2. It functions in the pathway cofactor biosynthesis; ubiquinone biosynthesis. Functionally, catalyzes the decarboxylation of 3-octaprenyl-4-hydroxy benzoate to 2-octaprenylphenol, an intermediate step in ubiquinone biosynthesis. In Pseudomonas putida (strain W619), this protein is 3-octaprenyl-4-hydroxybenzoate carboxy-lyase.